A 583-amino-acid polypeptide reads, in one-letter code: Leucine aminopeptidase 2, chloroplastic (583 aa).

A chloroplast-targeting transit peptide spans 1 to 70; that stretch reads MAVTLVTSFA…ISHATLGLTQ (70 aa). Mn(2+) is bound by residues K351 and D356. Residue K363 is part of the active site. Residues D376, D436, and E438 each coordinate Mn(2+). R440 is a catalytic residue.

The protein belongs to the peptidase M17 family. Homohexamer (dimer of homotrimers). Mn(2+) serves as cofactor.

It localises to the plastid. Its subcellular location is the chloroplast. It carries out the reaction Release of an N-terminal amino acid, Xaa-|-Yaa-, in which Xaa is preferably Leu, but may be other amino acids including Pro although not Arg or Lys, and Yaa may be Pro. Amino acid amides and methyl esters are also readily hydrolyzed, but rates on arylamides are exceedingly low.. The catalysed reaction is Release of N-terminal proline from a peptide.. Presumably involved in the processing and regular turnover of intracellular proteins. Catalyzes the removal of unsubstituted N-terminal amino acids from various peptides. Possesses leucine aminopeptidase activity against the model substrate leucine-amido methyl coumarin. Does not seem to possess Cys-Gly dipeptidase activity. Functionally, functions as a molecular chaperone to protect proteins from heat-induced damage. In Arabidopsis thaliana (Mouse-ear cress), this protein is Leucine aminopeptidase 2, chloroplastic.